The primary structure comprises 649 residues: L-ornithine N(5)-monooxygenase (649 aa).

FAD contacts are provided by residues 72 to 80 (EKRGHFAWH) and Gln91. Lys96 is a binding site for substrate. Val157 lines the FAD pocket. NADP(+)-binding positions include 289 to 292 (AGQS) and Arg314. Residues 328–331 (NSAA) and Asn359 contribute to the substrate site. 359–361 (NYS) serves as a coordination point for NADP(+). Positions 512 to 547 (AMQSDAVRSGKSSPGSGSDASSTSSQQTLASENSTE) are disordered. Residues 520–536 (SGKSSPGSGSDASSTSS) show a composition bias toward low complexity. The segment covering 537–547 (QQTLASENSTE) has biased composition (polar residues). 569–571 (SLL) is an FAD binding site. Ser572 is a substrate binding site. The tract at residues 585–611 (LLQRLPRTRRGTASSAATQPAASTVAS) is disordered. Residues 596–611 (TASSAATQPAASTVAS) are compositionally biased toward low complexity.

It belongs to the lysine N(6)-hydroxylase/L-ornithine N(5)-oxygenase family. In terms of assembly, homotetramer. FAD is required as a cofactor.

It catalyses the reaction L-ornithine + NADPH + O2 = N(5)-hydroxy-L-ornithine + NADP(+) + H2O. It carries out the reaction L-ornithine + NADH + O2 = N(5)-hydroxy-L-ornithine + NAD(+) + H2O. Its pathway is siderophore biosynthesis; ferrichrome biosynthesis. Functionally, catalyzes the conversion of L-ornithine to N(5)-hydroxyornithine, the first step in the biosynthesis of all hydroxamate-containing siderophores, such as ferrichrome. The chain is L-ornithine N(5)-monooxygenase (SID1) from Mycosarcoma maydis (Corn smut fungus).